The following is a 259-amino-acid chain: GTP cyclohydrolase FolE2 (259 aa).

This sequence belongs to the GTP cyclohydrolase IV family.

The catalysed reaction is GTP + H2O = 7,8-dihydroneopterin 3'-triphosphate + formate + H(+). It participates in cofactor biosynthesis; 7,8-dihydroneopterin triphosphate biosynthesis; 7,8-dihydroneopterin triphosphate from GTP: step 1/1. In terms of biological role, converts GTP to 7,8-dihydroneopterin triphosphate. The sequence is that of GTP cyclohydrolase FolE2 from Nitratidesulfovibrio vulgaris (strain DSM 19637 / Miyazaki F) (Desulfovibrio vulgaris).